A 601-amino-acid chain; its full sequence is Elongation factor 4 (601 aa).

Residues 5-187 enclose the tr-type G domain; the sequence is ENIRNFCIIA…AIVHHLPAPK (183 aa). Residues 17-22 and 134-137 contribute to the GTP site; these read DHGKST and NKID.

This sequence belongs to the TRAFAC class translation factor GTPase superfamily. Classic translation factor GTPase family. LepA subfamily.

The protein localises to the cell inner membrane. It carries out the reaction GTP + H2O = GDP + phosphate + H(+). Functionally, required for accurate and efficient protein synthesis under certain stress conditions. May act as a fidelity factor of the translation reaction, by catalyzing a one-codon backward translocation of tRNAs on improperly translocated ribosomes. Back-translocation proceeds from a post-translocation (POST) complex to a pre-translocation (PRE) complex, thus giving elongation factor G a second chance to translocate the tRNAs correctly. Binds to ribosomes in a GTP-dependent manner. The protein is Elongation factor 4 of Desulfovibrio desulfuricans (strain ATCC 27774 / DSM 6949 / MB).